The sequence spans 288 residues: Pantothenate synthetase (288 aa).

30 to 37 (MGALHEGH) contributes to the ATP binding site. Catalysis depends on His37, which acts as the Proton donor. Residue Gln61 coordinates (R)-pantoate. Gln61 provides a ligand contact to beta-alanine. Residue 147–150 (GEKD) coordinates ATP. Gln153 is a binding site for (R)-pantoate. ATP-binding positions include Val176 and 184–187 (ISSR).

It belongs to the pantothenate synthetase family. As to quaternary structure, homodimer.

It is found in the cytoplasm. It catalyses the reaction (R)-pantoate + beta-alanine + ATP = (R)-pantothenate + AMP + diphosphate + H(+). It functions in the pathway cofactor biosynthesis; (R)-pantothenate biosynthesis; (R)-pantothenate from (R)-pantoate and beta-alanine: step 1/1. Its function is as follows. Catalyzes the condensation of pantoate with beta-alanine in an ATP-dependent reaction via a pantoyl-adenylate intermediate. In Chlorobium phaeobacteroides (strain BS1), this protein is Pantothenate synthetase.